The primary structure comprises 182 residues: MEENLADNSEREARPSKTKRKKEMHALQNIGESLVRLDSRRLIELGLPDTLMEAVLEAKRMSKHGALRRQMQLIGKLMRDVDAEPIRKKLDLWGNSSAESTARLHQLERWRERLMADQQMQALSELGQKYPDADLQRLRALARNAVKEKLANKPPKSFRALFQELQKIIPAATGERPGEGID.

Residues 1-25 (MEENLADNSEREARPSKTKRKKEMH) are disordered.

This sequence belongs to the DarP family.

It is found in the cytoplasm. Member of a network of 50S ribosomal subunit biogenesis factors which assembles along the 30S-50S interface, preventing incorrect 23S rRNA structures from forming. Promotes peptidyl transferase center (PTC) maturation. The polypeptide is Dual-action ribosomal maturation protein DarP (Nitrosospira multiformis (strain ATCC 25196 / NCIMB 11849 / C 71)).